The sequence spans 609 residues: Elongation factor 4 (609 aa).

The tr-type G domain occupies 5 to 187 (SKIRNFSIIA…AIVAKIPPPE (183 aa)). Residues 17-22 (DHGKST) and 134-137 (NKID) contribute to the GTP site.

This sequence belongs to the TRAFAC class translation factor GTPase superfamily. Classic translation factor GTPase family. LepA subfamily.

The protein localises to the cell inner membrane. It catalyses the reaction GTP + H2O = GDP + phosphate + H(+). Functionally, required for accurate and efficient protein synthesis under certain stress conditions. May act as a fidelity factor of the translation reaction, by catalyzing a one-codon backward translocation of tRNAs on improperly translocated ribosomes. Back-translocation proceeds from a post-translocation (POST) complex to a pre-translocation (PRE) complex, thus giving elongation factor G a second chance to translocate the tRNAs correctly. Binds to ribosomes in a GTP-dependent manner. The polypeptide is Elongation factor 4 (Erythrobacter litoralis (strain HTCC2594)).